Consider the following 250-residue polypeptide: Envelope glycoprotein L (250 aa).

A signal peptide spans 1 to 18 (MELLLFVMSLILLTFSKA). The region spanning 31–239 (KLDDCIAAVI…EAYNSKLPFR (209 aa)) is the gL betaherpesvirus-type domain. A disulfide bridge links C136 with C141.

It belongs to the herpesviridae glycoprotein L (gL) family. Betaherpesvirinae gL subfamily. As to quaternary structure, interacts with glycoprotein H (gH); this interaction is necessary for the correct processing and cell surface expression of gH. Part of a gH-gL-gO complex.

It localises to the virion membrane. The protein localises to the host cell membrane. It is found in the host Golgi apparatus. The protein resides in the host trans-Golgi network. Its function is as follows. The heterodimer glycoprotein H-glycoprotein L is required for the fusion of viral and plasma membranes leading to virus entry into the host cell. Acts as a functional inhibitor of gH and maintains gH in an inhibited form. Upon binding to host integrins, gL dissociates from gH leading to activation of the viral fusion glycoproteins gB and gH. The sequence is that of Envelope glycoprotein L from Homo sapiens (Human).